The primary structure comprises 229 residues: Protein rep (229 aa).

Tyr-214 contributes to the DNA binding site.

It belongs to the Gram-positive plasmids replication protein type 1 family.

Its function is as follows. Produces a single-strand nick in a specific site of the plasmid, and this nick results in single-strand replication by rolling circle mechanism. This chain is Protein rep, found in Staphylococcus aureus.